Reading from the N-terminus, the 138-residue chain is Small ribosomal subunit protein uS11c (138 aa).

Residues M1–A22 are disordered. Basic residues predominate over residues S9 to A22.

This sequence belongs to the universal ribosomal protein uS11 family. Part of the 30S ribosomal subunit.

The protein localises to the plastid. It localises to the chloroplast. This Nicotiana tomentosiformis (Tobacco) protein is Small ribosomal subunit protein uS11c.